The chain runs to 344 residues: MSAGIGESRTELLTWLNGLLNLNYKKIEECGTGAAYCQIMDSIYGDLPMNRVKFNATAEYEFQTNYKILQSCFSRHGIEKTVYVDKLIRCKFQDNLEFLQWLKKHWIRHKDESVYDPDARRKYRPIITNNSATKPRTVSNPTTAKRSSSTGTGSAMSGGLATRHSSLGINGSRKTSVTQGQLVAIQAELTKSQETIGSLNEEIEQYKGTVSTLEIEREFYFNKLRDIEILVHTTQDLINEGVYKFNDETITGHGNGNGGALLRFVKKVESILYATAEGFEMNDGEDELNDKNLGEHGTVPNQGGYANSNGEVNGNEGSNHDVIMQNDEGEVGVSNNLIIDEETF.

Ser2 is modified (N-acetylserine). The Calponin-homology (CH) domain occupies 6–107; it reads GESRTELLTW…FLQWLKKHWI (102 aa). Residues 126-173 form a disordered region; the sequence is IITNNSATKPRTVSNPTTAKRSSSTGTGSAMSGGLATRHSSLGINGSR. Positions 127–146 are enriched in polar residues; sequence ITNNSATKPRTVSNPTTAKR. A compositionally biased stretch (low complexity) spans 147–159; the sequence is SSSTGTGSAMSGG. Residue Ser157 is modified to Phosphoserine. Residues 163–173 are compositionally biased toward polar residues; the sequence is RHSSLGINGSR. The 94-residue stretch at 188–281 folds into the EB1 C-terminal domain; the sequence is ELTKSQETIG…LYATAEGFEM (94 aa). A disordered region spans residues 292–312; sequence NLGEHGTVPNQGGYANSNGEV.

The protein belongs to the MAPRE family.

Its subcellular location is the cytoplasm. It localises to the cytoskeleton. Binds microtubules. The protein is Protein BIM1 (BIM1) of Saccharomyces cerevisiae (strain ATCC 204508 / S288c) (Baker's yeast).